The primary structure comprises 162 residues: Transcription elongation factor GreA (162 aa).

The stretch at 45-75 (ENAEYEAAREKQAFIEGRIKELEDMAARAEI) forms a coiled coil.

The protein belongs to the GreA/GreB family.

Functionally, necessary for efficient RNA polymerase transcription elongation past template-encoded arresting sites. The arresting sites in DNA have the property of trapping a certain fraction of elongating RNA polymerases that pass through, resulting in locked ternary complexes. Cleavage of the nascent transcript by cleavage factors such as GreA or GreB allows the resumption of elongation from the new 3'terminus. GreA releases sequences of 2 to 3 nucleotides. The polypeptide is Transcription elongation factor GreA (Rickettsia canadensis (strain McKiel)).